The sequence spans 474 residues: Protein anachronism (474 aa).

The N-terminal stretch at 1–33 is a signal peptide; the sequence is MASAMRGEKCERSRIRELVLILSLITMAGDSRA. 5 N-linked (GlcNAc...) asparagine glycosylation sites follow: N54, N62, N73, N116, and N144. A disordered region spans residues 173–195; it reads NPGQTREHNPGQASTQPISTENP. Residues 183 to 195 show a composition bias toward polar residues; the sequence is GQASTQPISTENP. The N-linked (GlcNAc...) asparagine glycan is linked to N342. The segment covering 359–372 has biased composition (polar residues); it reads FIESTTSNSPTIDN. Positions 359 to 474 are disordered; the sequence is FIESTTSNSP…HHRIPAHKQE (116 aa). Composition is skewed to basic residues over residues 390–400 and 437–474; these read LVHHRRHHHNH and NHHRHRTGHHHPHHQLHQHHHHHHRHTKHHRIPAHKQE.

In terms of tissue distribution, synthesized in some glial cells and secreted.

The protein localises to the secreted. Functionally, negatively regulates proliferation of neuronal precursor cells, thereby controlling the timing of postembryonic neurogenesis. The chain is Protein anachronism (ana) from Drosophila melanogaster (Fruit fly).